The primary structure comprises 299 residues: Protease HtpX homolog (299 aa).

The next 2 helical transmembrane spans lie at 16 to 36 (VMAAFVILLAVIGLAVGYVFF) and 38 to 58 (SAIAGLLVALIAAVFYMVLMI). His-144 is a Zn(2+) binding site. The active site involves Glu-145. His-148 contributes to the Zn(2+) binding site. 2 consecutive transmembrane segments (helical) span residues 159 to 179 (IALALTAAISLLVNWGMNAFW) and 198 to 218 (VLLMILAIVVIILAPLAASLV). Residue Glu-227 participates in Zn(2+) binding.

The protein belongs to the peptidase M48B family. Zn(2+) serves as cofactor.

It is found in the cell membrane. This chain is Protease HtpX homolog, found in Lactiplantibacillus plantarum (strain ATCC BAA-793 / NCIMB 8826 / WCFS1) (Lactobacillus plantarum).